We begin with the raw amino-acid sequence, 118 residues long: MLDSLKQKKNFKRIKMRIKTGDLVKVINGKEKGKTGEVLKTIPLENRVVVKGVNLRTKHVKPSQEGESGRILTEEASLHASNVMFFSKDKNLISKIEYFIDKEGVKKRRLKKTGELID.

Belongs to the universal ribosomal protein uL24 family. In terms of assembly, part of the 50S ribosomal subunit.

Functionally, one of two assembly initiator proteins, it binds directly to the 5'-end of the 23S rRNA, where it nucleates assembly of the 50S subunit. In terms of biological role, one of the proteins that surrounds the polypeptide exit tunnel on the outside of the subunit. This chain is Large ribosomal subunit protein uL24, found in Prochlorococcus marinus subsp. pastoris (strain CCMP1986 / NIES-2087 / MED4).